We begin with the raw amino-acid sequence, 2035 residues long: Host cell factor 1 (2035 aa).

Alanine 2 bears the N-acetylalanine mark. Phosphoserine is present on serine 6. 5 Kelch repeats span residues 44-89 (LIVV…GFVC), 93-140 (RLLV…RLGH), 148-194 (KCYL…ITYG), 217-265 (KLVI…TIGN), and 266-313 (KMYV…LMDT). Residues lysine 105, lysine 163, and lysine 244 each participate in a glycyl lysine isopeptide (Lys-Gly) (interchain with G-Cter in ubiquitin) cross-link. Lysine 282 participates in a covalent cross-link: Glycyl lysine isopeptide (Lys-Gly) (interchain with G-Cter in SUMO2). Lysine 288 carries the N6-acetyllysine modification. Lysine 363 participates in a covalent cross-link: Glycyl lysine isopeptide (Lys-Gly) (interchain with G-Cter in ubiquitin). In terms of domain architecture, Fibronectin type-III 1 spans 366–466 (PPARVQLVRA…TTTTIQVLPT (101 aa)). The tract at residues 407 to 434 (ATATSPTPNPVPSVPANPPKSPAPAAAA) is disordered. Serine 411 carries the post-translational modification Phosphoserine. Pro residues predominate over residues 413 to 428 (TPNPVPSVPANPPKSP). Residues 500–550 (LVTMRPASQAGKAPVTVTSLPAGVRMVVPTQSAQGTVIGSSPQMSGMAALA) are required for interaction with OGT. Omega-N-methylarginine is present on residues arginine 504 and arginine 524. 3 positions are modified to phosphoserine: serine 598, serine 666, and serine 669. The interaction with SIN3A stretch occupies residues 610–722 (LKTAAAQVGT…KGPLPAGTIL (113 aa)). The interval 750 to 902 (ILGISSVSPS…SLAGAGGHST (153 aa)) is interaction with ZBTB17. Lysine 813 carries the N6-acetyllysine modification. The tract at residues 813-912 (KIITAVPKIA…SASLATPITT (100 aa)) is interaction with GABP2. HCF repeat repeat units follow at residues 1010-1035 (TLVC…TVVA), 1072-1097 (VRVC…ATSN), and 1101-1126 (QHGC…AMSS). One copy of the HCF repeat 4; degenerate repeat lies at 1158-1183 (AAQGSKSQCQTRQTSATSTTMTVMAT). Serine 1205 carries the phosphoserine modification. Arginine 1219 carries the post-translational modification Omega-N-methylarginine. Serine 1224 bears the Phosphoserine mark. HCF repeat repeat units follow at residues 1286–1311 (TQVC…SNAG) and 1314–1339 (QRVC…ATSN). Disordered stretches follow at residues 1292–1371 (PPCE…TMSV), 1435–1470 (TVTS…TSSS), and 1487–1515 (VTQS…QQLP). Low complexity-rich tracts occupy residues 1299-1312 (TGTT…NAGS), 1329-1339 (TTHTATTATSN), and 1362-1371 (TTSTGTTMSV). An HCF repeat 7; degenerate repeat occupies 1349-1374 (QQPPAGRPCETHQTTSTGTTMSVSVG). Residues 1414–1439 (QRVCSNPPCETHETGTTHTATTVTSN) form an HCF repeat 8 repeat. Residue threonine 1491 is modified to Phosphothreonine. Residues 1493–1502 (VPGPSVPPPE) are compositionally biased toward pro residues. Residues serine 1497, serine 1507, and serine 1771 each carry the phosphoserine modification. Fibronectin type-III domains are found at residues 1797 to 1888 (LPPP…TCLP) and 1890 to 2006 (FPGA…TSKD). Glycyl lysine isopeptide (Lys-Gly) (interchain with G-Cter in ubiquitin) cross-links involve residues lysine 1807 and lysine 1808. Residue serine 1838 is modified to Phosphoserine. The segment at 1994–2035 (ATQVRWLQETSKDSSGTKPANKRPMSSPEMKSAPKKSKADGQ) is disordered. At lysine 2005 the chain carries N6-acetyllysine. Lysine 2024 is covalently cross-linked (Glycyl lysine isopeptide (Lys-Gly) (interchain with G-Cter in SUMO2)).

Composed predominantly of six polypeptides ranging from 110 to 150 kDa and a minor 300 kDa polypeptide. The majority of N- and C-terminal cleavage products remain tightly, albeit non-covalently, associated. Interacts with POU2F1, CREB3, ZBTB17, EGR2, E2F4, CREBZF, SP1, GABP2, Sin3 HDAC complex (SIN3A, HDAC1, HDAC2, SUDS3), SAP30, SIN3B and FHL2. Component of a MLL1 complex, composed of at least the core components KMT2A/MLL1, ASH2L, HCFC1, WDR5 and RBBP5, as well as the facultative components BACC1, CHD8, DPY30, E2F6, HCFC2, HSP70, INO80C, KANSL1, LAS1L, MAX, MCRS1, MEN1, MGA, KAT8, PELP1, PHF20, PRP31, RING2, RUVBL1, RUVBL2, SENP3, TAF1, TAF4, TAF6, TAF7, TAF9 and TEX10. Component of a THAP1/THAP3-HCFC1-OGT complex that is required for the regulation of the transcriptional activity of RRM1. Interacts directly with THAP3 (via its HBM). Interacts (via the Kelch-repeat domain) with THAP1 (via the HBM); the interaction recruits HCHC1 to the RRM1. Interacts with THAP7 and THAP11 (via the HMB). Interacts directly with OGT; the interaction, which requires the HCFC1 cleavage site domain, glycosylates and promotes the proteolytic processing of HCFC1, retains OGT in the nucleus and impacts the expression of herpes simplex virus immediate early viral genes. Component of the SET1 complex, at least composed of the catalytic subunit (SETD1A or SETD1B), WDR5, WDR82, RBBP5, ASH2L, CXXC1, HCFC1 and DPY30. Component of the NSL complex at least composed of MOF/KAT8, KANSL1, KANSL2, KANSL3, MCRS1, PHF20, OGT1/OGT, WDR5 and HCFC1. Component of a complex at least composed of ZNF335, HCFC1, CCAR2, EMSY, MKI67, RBBP5, ASH2L and WDR5; the complex is formed as a result of interactions between components of a nuclear receptor-mediated transcription complex and a histone methylation complex. Within the complex interacts with ZNF335. Interacts with TET2 and TET3. Interacts with HCFC1R1. Interacts with THAP11. Interacts (via Kelch domain) with KMT2E/MLL5 isoform 3 (via HBM motif). Interacts with E2F1. Accessory scaffold component of the polycomb repressive deubiquitinase (PR-DUB) complex, at least composed of BAP1, one of ASXL1, ASXL2 or (probably) ASXL3 and one of MBD5 or MBD6; the PR-DUB core associates with a number of accessory proteins, including FOXK1, FOXK2, KDM1B, HCFC1, YY1 and OGT. Interacts with YY1 (via Gly-rich region); the interaction is direct. Interacts with BAP1 (via HBM-like motif). In terms of assembly, (Microbial infection) Associates with the VP16-induced complex; binding to HCFC1 activates the viral transcriptional activator VP16 for association with POU2F1, to form a multiprotein-DNA complex responsible for activating transcription of the viral immediate early genes. Interacts with the viral transactivator protein VP16. Post-translationally, proteolytically cleaved at one or several PPCE--THET sites within the HCF repeats. Further cleavage of the primary N- and C-terminal chains results in a 'trimming' and accumulation of the smaller chains. Cleavage is promoted by O-glycosylation. O-glycosylated. GlcNAcylation by OGT promotes proteolytic processing. In terms of processing, ubiquitinated. Lys-1807 and Lys-1808 are ubiquitinated both via 'Lys-48'- and 'Lys-63'-linked polyubiquitin chains. BAP1 mediated deubiquitination of 'Lys-48'-linked polyubiquitin chains; deubiquitination by BAP1 does not seem to stabilize the protein. As to expression, highly expressed in fetal tissues and the adult kidney. Present in all tissues tested.

The protein localises to the cytoplasm. Its subcellular location is the nucleus. Transcriptional coregulator. Serves as a scaffold protein, bridging interactions between transcription factors, including THAP11 and ZNF143, and transcriptional coregulators. Involved in control of the cell cycle. Also antagonizes transactivation by ZBTB17 and GABP2; represses ZBTB17 activation of the p15(INK4b) promoter and inhibits its ability to recruit p300. Coactivator for EGR2 and GABP2. Tethers the chromatin modifying Set1/Ash2 histone H3 'Lys-4' methyltransferase (H3K4me) and Sin3 histone deacetylase (HDAC) complexes (involved in the activation and repression of transcription, respectively) together. Component of a THAP1/THAP3-HCFC1-OGT complex that is required for the regulation of the transcriptional activity of RRM1. As part of the NSL complex it may be involved in acetylation of nucleosomal histone H4 on several lysine residues. Recruits KMT2E/MLL5 to E2F1 responsive promoters promoting transcriptional activation and thereby facilitates G1 to S phase transition. Modulates expression of homeobox protein PDX1, perhaps acting in concert with transcription factor E2F1, thereby regulating pancreatic beta-cell growth and glucose-stimulated insulin secretion. May negatively modulate transcriptional activity of FOXO3. In terms of biological role, (Microbial infection) In case of human herpes simplex virus (HSV) infection, HCFC1 forms a multiprotein-DNA complex with the viral transactivator protein VP16 and POU2F1 thereby enabling the transcription of the viral immediate early genes. The sequence is that of Host cell factor 1 from Homo sapiens (Human).